The primary structure comprises 346 residues: Phosphoribosylformylglycinamidine cyclo-ligase (346 aa).

The protein belongs to the AIR synthase family.

It localises to the cytoplasm. The enzyme catalyses 2-formamido-N(1)-(5-O-phospho-beta-D-ribosyl)acetamidine + ATP = 5-amino-1-(5-phospho-beta-D-ribosyl)imidazole + ADP + phosphate + H(+). It participates in purine metabolism; IMP biosynthesis via de novo pathway; 5-amino-1-(5-phospho-D-ribosyl)imidazole from N(2)-formyl-N(1)-(5-phospho-D-ribosyl)glycinamide: step 2/2. This chain is Phosphoribosylformylglycinamidine cyclo-ligase, found in Bacillus anthracis (strain A0248).